The primary structure comprises 393 residues: Beta-1,4-galactosyltransferase 3 (393 aa).

At 1 to 10 (MLRRLLERPC) the chain is on the cytoplasmic side. A helical; Signal-anchor for type II membrane protein membrane pass occupies residues 11 to 31 (TLALLVGSQLAVMMYLSLGGF). Residues 32 to 393 (RSLSALFGRD…ANHTALRGSH (362 aa)) are Lumenal-facing. N-linked (GlcNAc...) asparagine glycosylation occurs at Asn57. Cys77 and Cys119 are oxidised to a cystine. 130–134 (PHRAR) is a UDP-alpha-D-galactose binding site. N-linked (GlcNAc...) asparagine glycosylation occurs at Asn166. UDP-alpha-D-galactose is bound by residues 169–171 (FNR), 196–197 (VD), Tyr226, and Trp258. Cysteines 190 and 209 form a disulfide. A Mn(2+)-binding site is contributed by Asp197. Residue 260 to 263 (GEDD) coordinates N-acetyl-D-glucosamine. His291 is a binding site for Mn(2+). 291-293 (HRG) is a binding site for UDP-alpha-D-galactose. Residue Arg303 participates in N-acetyl-D-glucosamine binding. Residues Asn337 and Asn385 are each glycosylated (N-linked (GlcNAc...) asparagine). The tract at residues 339–393 (TADIGTDPRGPRAPSGPRYPPGSSQAFRQEMLQRRPPARPGPLSTANHTALRGSH) is disordered.

This sequence belongs to the glycosyltransferase 7 family. It depends on Mn(2+) as a cofactor. In terms of tissue distribution, found in various tissues. Highest expression in placenta, prostate, testis, ovary, intestine and muscle, and in fetal brain.

Its subcellular location is the golgi apparatus. It localises to the golgi stack membrane. The catalysed reaction is an N-acetyl-beta-D-glucosaminyl derivative + UDP-alpha-D-galactose = a beta-D-galactosyl-(1-&gt;4)-N-acetyl-beta-D-glucosaminyl derivative + UDP + H(+). The enzyme catalyses N-acetyl-D-glucosamine + UDP-alpha-D-galactose = beta-D-galactosyl-(1-&gt;4)-N-acetyl-D-glucosamine + UDP + H(+). It catalyses the reaction a beta-D-GlcNAc-(1-&gt;3)-beta-D-Gal-(1-&gt;4)-beta-D-Glc-(1&lt;-&gt;1)-Cer(d18:1(4E)) + UDP-alpha-D-galactose = a neolactoside nLc4Cer(d18:1(4E)) + UDP + H(+). It carries out the reaction a beta-D-glucosylceramide + UDP-alpha-D-galactose = a beta-D-galactosyl-(1-&gt;4)-beta-D-glucosyl-(1&lt;-&gt;1)-ceramide + UDP + H(+). The catalysed reaction is a neolactoside IV(3)-beta-GlcNAc-nLc4Cer + UDP-alpha-D-galactose = a neolactoside nLc6Cer + UDP + H(+). Its pathway is protein modification; protein glycosylation. Responsible for the synthesis of complex-type N-linked oligosaccharides in many glycoproteins as well as the carbohydrate moieties of glycolipids. The sequence is that of Beta-1,4-galactosyltransferase 3 from Homo sapiens (Human).